A 1281-amino-acid polypeptide reads, in one-letter code: Zinc finger transcription factor Trps1 (1281 aa).

Residues 1–198 are disordered; it reads MVRKKNPPLR…VPSDGGVRLN (198 aa). A Glycyl lysine isopeptide (Lys-Gly) (interchain with G-Cter in SUMO2) cross-link involves residue lysine 29. Polar residues predominate over residues 40–49; sequence DQMSENTDQS. Over residues 53–63 the composition is skewed to basic and acidic residues; it reads ELNHKEEHSLH. A Glycyl lysine isopeptide (Lys-Gly) (interchain with G-Cter in SUMO2) cross-link involves residue lysine 76. Phosphoserine is present on residues serine 90 and serine 127. Residues 148-162 are compositionally biased toward basic and acidic residues; the sequence is LETKEDQKMSPKATE. Over residues 163–189 the composition is skewed to polar residues; that stretch reads ETGQAQSGQANCQGLSPVSVASKNPQV. Phosphoserine occurs at positions 178 and 216. Residues 222 to 247 form a C2H2-type 1; atypical zinc finger; that stretch reads FKCNICGYGYYGNDPTDLIKHFRKYH. Lysine 263 is covalently cross-linked (Glycyl lysine isopeptide (Lys-Gly) (interchain with G-Cter in SUMO2)). The segment at 333–358 adopts a C2H2-type 2; atypical zinc-finger fold; that stretch reads FRCKFCNFTYMGNSSTELEQHFLQTH. The disordered stretch occupies residues 365-394; sequence SLPSSEVAKPSEKNSNKSIPALQSSDSGDL. Over residues 380-391 the composition is skewed to polar residues; that stretch reads NKSIPALQSSDS. Glycyl lysine isopeptide (Lys-Gly) (interchain with G-Cter in SUMO2) cross-links involve residues lysine 418, lysine 457, lysine 474, and lysine 488. Positions 483-512 are disordered; it reads QNDLAKSSEGETMTKTDKSSSGAKKKDFSS. The segment covering 488–512 has biased composition (basic and acidic residues); that stretch reads KSSEGETMTKTDKSSSGAKKKDFSS. The C2H2-type 3; atypical zinc-finger motif lies at 614-637; the sequence is HQCHQCSFTTPDVDVLLFHYESVH. A mediates interaction with GLI3 region spans residues 635-819; the sequence is SVHESQASDV…SLGLLTPVSG (185 aa). Residue lysine 645 forms a Glycyl lysine isopeptide (Lys-Gly) (interchain with G-Cter in SUMO2) linkage. C2H2-type zinc fingers lie at residues 666–689 and 692–715; these read HSCT…RRAH and YKCR…NTVH. Residue lysine 737 forms a Glycyl lysine isopeptide (Lys-Gly) (interchain with G-Cter in SUMO2) linkage. Threonine 751 carries the post-translational modification Phosphothreonine. Lysine 755 is covalently cross-linked (Glycyl lysine isopeptide (Lys-Gly) (interchain with G-Cter in SUMO2)). Residue lysine 766 forms a Glycyl lysine isopeptide (Lys-Gly) (interchain with G-Cter in SUMO1); alternate linkage. Lysine 766 is covalently cross-linked (Glycyl lysine isopeptide (Lys-Gly) (interchain with G-Cter in SUMO2); alternate). Glycyl lysine isopeptide (Lys-Gly) (interchain with G-Cter in SUMO2) cross-links involve residues lysine 825, lysine 850, lysine 877, and lysine 879. Positions 856–887 are disordered; sequence APAGGEKSGALPQQYPASGENKSKDESQSLLR. The segment at 896 to 920 adopts a GATA-type zinc-finger fold; that stretch reads CANCLTTKTSLWRKNANGGYVCNAC. Glycyl lysine isopeptide (Lys-Gly) (interchain with G-Cter in SUMO2) cross-links involve residues lysine 925, lysine 937, and lysine 965. Positions 961 to 977 are enriched in polar residues; the sequence is EQLNKQQRGSNEEQVNG. The tract at residues 961–1000 is disordered; sequence EQLNKQQRGSNEEQVNGSPLERRSEDHLTESHQREIPLPS. Phosphoserine is present on serine 978. The segment covering 980 to 995 has biased composition (basic and acidic residues); it reads LERRSEDHLTESHQRE. The interval 985-1184 is mediates interaction with RNF4; it reads EDHLTESHQR…PTANGASKEK (200 aa). Glycyl lysine isopeptide (Lys-Gly) (interchain with G-Cter in SUMO2) cross-links involve residues lysine 1003, lysine 1012, lysine 1030, and lysine 1040. The segment at 1039–1080 is disordered; that stretch reads IKSPQESTGDPGNSSSVSEGKGSSERGSPIEKYMRPAKHPNY. Positions 1040–1049 are enriched in polar residues; sequence KSPQESTGDP. Residue serine 1041 is modified to Phosphoserine. Over residues 1050–1059 the composition is skewed to low complexity; the sequence is GNSSSVSEGK. Residues 1060–1072 show a composition bias toward basic and acidic residues; that stretch reads GSSERGSPIEKYM. Serine 1066 carries the phosphoserine modification. Residue lysine 1070 forms a Glycyl lysine isopeptide (Lys-Gly) (interchain with G-Cter in SUMO2) linkage. Phosphoserine is present on serine 1085. The tract at residues 1163 to 1281 is transcriptional repressor domain; that stretch reads PLDLAIKHSR…QVEKNGKPKE (119 aa). The interval 1168–1196 is disordered; it reads IKHSRPGPTANGASKEKTKAPPNVKNEGP. Glycyl lysine isopeptide (Lys-Gly) (interchain with G-Cter in SUMO2); alternate cross-links involve residues lysine 1192 and lysine 1201. Residues lysine 1192 and lysine 1201 each participate in a glycyl lysine isopeptide (Lys-Gly) (interchain with G-Cter in SUMO); alternate cross-link. Lysine 1201 is covalently cross-linked (Glycyl lysine isopeptide (Lys-Gly) (interchain with G-Cter in SUMO1); alternate). 2 C2H2-type zinc fingers span residues 1215-1237 and 1243-1267; these read TKCV…MSCH and FQCS…RGLH.

As to quaternary structure, interacts with RNF4; regulates TRPS1 repressor activity. Interacts specifically with the activator form of GLI3 (GLI3A) but not with the repressor form (GLI3R). In terms of processing, sumoylated. Sumoylation in the repressor domain inhibits the transcription repression activity. Sumoylation on Lys-1201 is the major site. Appears to be sumoylated on multiple sites. In terms of tissue distribution, ubiquitously expressed in the adult. Found in fetal brain, lung, kidney, liver, spleen and thymus. More highly expressed in androgen-dependent than in androgen-independent prostate cancer cells.

Its subcellular location is the nucleus. Its function is as follows. Transcriptional repressor. Binds specifically to GATA sequences and represses expression of GATA-regulated genes at selected sites and stages in vertebrate development. Regulates chondrocyte proliferation and differentiation. Executes multiple functions in proliferating chondrocytes, expanding the region of distal chondrocytes, activating proliferation in columnar cells and supporting the differentiation of columnar into hypertrophic chondrocytes. The sequence is that of Zinc finger transcription factor Trps1 (TRPS1) from Homo sapiens (Human).